The primary structure comprises 251 residues: Acidic leucine-rich nuclear phosphoprotein 32 family member B (251 aa).

LRR repeat units lie at residues 16–40, 43–64, and 65–84; these read PAAV…LTAE, NLEF…PKLP, and KLKK…DMLA. K86 carries the N6-acetyllysine modification. The stretch at 89-110 is one LRR 4 repeat; it reads NLTHLNLSGNKLKDISTLEPLK. The 39-residue stretch at 123–161 folds into the LRRCT domain; sequence CEVTNLNDYRESVFKLLPQLTYLDGYDREDQEAPDSDAE. Residues 149-233 are compositionally biased toward acidic residues; that stretch reads DREDQEAPDS…DEDEDEEEEE (85 aa). Positions 149–251 are disordered; sequence DREDQEAPDS…RETDDEGEDD (103 aa). The residue at position 158 (S158) is a Phosphoserine. The segment covering 234–244 has biased composition (basic and acidic residues); it reads GGKGEKRKRET. Positions 239–242 match the Nuclear localization signal motif; sequence KRKR. Position 244 is a phosphothreonine (T244).

This sequence belongs to the ANP32 family. Interacts with histones H3 and H4. Interacts with KLF5; this interaction induces promoter region-specific histone incorporation and inhibition of histone acetylation by ANP32B. In terms of assembly, (Microbial infection) Interacts with Sendai virus protein M. As to quaternary structure, (Microbial infection) Interacts with Measles virus protein M. (Microbial infection) Interacts with Hendra virus protein M; this interaction promotes nuclear localization of M. In terms of assembly, (Microbial infection) Interacts with influenza virus B protein PB2; this interaction strongly supports influenza B virus replication. In terms of processing, some glutamate residues are glycylated by TTLL8. This modification occurs exclusively on glutamate residues and results in a glycine chain on the gamma-carboxyl group. Directly cleaved by caspase-3/CASP3. In terms of tissue distribution, expressed in heart, lung, pancreas, prostate and in spleen, thymus and placenta.

It is found in the nucleus. Its subcellular location is the cytoplasm. Multifunctional protein that is involved in the regulation of many processes including cell proliferation, apoptosis, cell cycle progression or transcription. Regulates the proliferation of neuronal stem cells, differentiation of leukemic cells and progression from G1 to S phase of the cell cycle. As negative regulator of caspase-3-dependent apoptosis, may act as an antagonist of ANP32A in regulating tissue homeostasis. Exhibits histone chaperone properties, able to recruit histones to certain promoters, thus regulating the transcription of specific genes. Also plays an essential role in the nucleocytoplasmic transport of specific mRNAs via the uncommon nuclear mRNA export receptor XPO1/CRM1. Participates in the regulation of adequate adaptive immune responses by acting on mRNA expression and cell proliferation. Its function is as follows. (Microbial infection) Plays an essential role in influenza A and B viral genome replication. Also plays a role in foamy virus mRNA export from the nucleus to the cytoplasm. The protein is Acidic leucine-rich nuclear phosphoprotein 32 family member B (ANP32B) of Homo sapiens (Human).